The following is a 200-amino-acid chain: CASP-like protein 1U2 (200 aa).

Residues 1–33 (MAEPVIVVPRKGVYSDDSYHHHHRHHSFHSCTN) are Cytoplasmic-facing. Residues 34 to 54 (FLLRTLTAGATAAAVVVMLIS) traverse the membrane as a helical segment. Residues 55–77 (TQTSGTIYGYFRGRWRDYPAYKW) are Extracellular-facing. Residues 78–98 (LIIANAVVFVYSVMAAIVACF) form a helical membrane-spanning segment. Over 99-120 (SVIARRGPLSYSPSAWLTLLVD) the chain is Cytoplasmic. Residues 121-141 (FLAASALISAASAALAVALLA) traverse the membrane as a helical segment. Over 142 to 168 (RNGQDLQGTHYWPTVCNYVSKFCDYTQ) the chain is Extracellular. A helical transmembrane segment spans residues 169 to 189 (GAIIASFVGFGLLFLSTLLAA). Topologically, residues 190-200 (SALYHLSHRRH) are cytoplasmic.

The protein belongs to the Casparian strip membrane proteins (CASP) family. In terms of assembly, homodimer and heterodimers.

Its subcellular location is the cell membrane. The polypeptide is CASP-like protein 1U2 (Physcomitrium patens (Spreading-leaved earth moss)).